Consider the following 264-residue polypeptide: Major prion protein 1 (264 aa).

A signal peptide spans 1-24 (MVKSHIGSWILVLFVAMWSDVALC). The segment at 25–241 (KKRPKPGGGW…ESEAYYQRGA (217 aa)) is interaction with GRB2, ERI3 and SYN1. Residues 28 to 118 (PKPGGGWNTG…QWNKPSKPKT (91 aa)) are disordered. Tandem repeats lie at residues 54–62 (SQGGGGWGQ), 63–70 (PHGGGWGQ), 71–78 (PHGGGWGQ), 79–86 (PHGGGWGQ), 87–94 (PHGGGWGQ), and 95–103 (PHGGGGWGQ). A 6 X 8 AA tandem repeats of P-H-G-G-G-W-G-Q region spans residues 54 to 103 (SQGGGGWGQPHGGGWGQPHGGGWGQPHGGGWGQPHGGGWGQPHGGGGWGQ). Over residues 55-107 (QGGGGWGQPHGGGWGQPHGGGWGQPHGGGWGQPHGGGWGQPHGGGGWGQGGTH) the composition is skewed to gly residues. Cu(2+)-binding residues include histidine 72, glycine 73, glycine 74, histidine 80, glycine 81, glycine 82, histidine 88, glycine 89, glycine 90, histidine 96, glycine 98, and glycine 99. Cysteine 190 and cysteine 225 form a disulfide bridge. N-linked (GlcNAc...) asparagine glycosylation is found at asparagine 192 and asparagine 208. Alanine 241 is lipidated: GPI-anchor amidated alanine. Positions 242–264 (SVILFSSPPVILLISFLIFLIVG) are cleaved as a propeptide — removed in mature form.

This sequence belongs to the prion family. Monomer and homodimer. Has a tendency to aggregate into amyloid fibrils containing a cross-beta spine, formed by a steric zipper of superposed beta-strands. Soluble oligomers may represent an intermediate stage on the path to fibril formation. Copper binding may promote oligomerization. Interacts with GRB2, APP, ERI3/PRNPIP and SYN1. Mislocalized cytosolically exposed PrP interacts with MGRN1; this interaction alters MGRN1 subcellular location and causes lysosomal enlargement. Interacts with KIAA1191.

It localises to the cell membrane. Its subcellular location is the golgi apparatus. In terms of biological role, its primary physiological function is unclear. Has cytoprotective activity against internal or environmental stresses. May play a role in neuronal development and synaptic plasticity. May be required for neuronal myelin sheath maintenance. May play a role in iron uptake and iron homeostasis. Soluble oligomers are toxic to cultured neuroblastoma cells and induce apoptosis (in vitro). Association with GPC1 (via its heparan sulfate chains) targets PRNP to lipid rafts. Also provides Cu(2+) or Zn(2+) for the ascorbate-mediated GPC1 deaminase degradation of its heparan sulfate side chains. In Tragelaphus strepsiceros (Greater kudu), this protein is Major prion protein 1.